A 313-amino-acid polypeptide reads, in one-letter code: Small ribosomal subunit protein uS2 (313 aa).

Residue serine 2 is modified to N-acetylserine. 2 laminin-binding regions span residues 161–180 (IPCNNKGHHSVGLMWWMLAR) and 205–229 (RDPEEIEKEEQAAAEKAVGKEEFQG). [DE]-W-[ST] repeat units follow at residues 230 to 232 (EWS) and 245 to 247 (DWS). The segment at 242–313 (EVADWSEGVA…DWGGTTSDWS (72 aa)) is laminin-binding. Positions 262–274 (PATAAAAAAAAPP) are enriched in low complexity. Residues 262 to 313 (PATAAAAAAAAPPVKTGEVFSEDWSTQPATDDWSTAPTAQASDWGGTTSDWS) are disordered. [DE]-W-[ST] repeat units lie at residues 284-286 (DWS), 293-295 (DWS), and 311-313 (DWS). Residues 284–313 (DWSTQPATDDWSTAPTAQASDWGGTTSDWS) are compositionally biased toward polar residues.

It belongs to the universal ribosomal protein uS2 family. As to quaternary structure, monomer (37LRP) and homodimer (67LR). Component of the small ribosomal subunit. Mature ribosomes consist of a small (40S) and a large (60S) subunit. The 40S subunit contains about 33 different proteins and 1 molecule of RNA (18S). The 60S subunit contains about 49 different proteins and 3 molecules of RNA (28S, 5.8S and 5S). Interacts with rps21. Interacts with several laminins including at least lamb1. Interacts with mdk. Acylated. Acylation may be a prerequisite for conversion of the monomeric 37 kDa laminin receptor precursor (37LRP) to the mature dimeric 67 kDa laminin receptor (67LR), and may provide a mechanism for membrane association. In terms of processing, cleaved by stromelysin-3 (ST3) at the cell surface. Cleavage by stromelysin-3 may be a mechanism to alter cell-extracellular matrix interactions.

It localises to the cell membrane. Its subcellular location is the cytoplasm. It is found in the nucleus. Required for the assembly and/or stability of the 40S ribosomal subunit. Required for the processing of the 20S rRNA-precursor to mature 18S rRNA in a late step of the maturation of 40S ribosomal subunits. Also functions as a cell surface receptor for laminin. Plays a role in cell adhesion to the basement membrane and in the consequent activation of signaling transduction pathways. May play a role in cell fate determination and tissue morphogenesis. The protein is Small ribosomal subunit protein uS2 (rpsa) of Solea senegalensis (Senegalese sole).